A 390-amino-acid chain; its full sequence is Precorrin-6Y C(5,15)-methyltransferase [decarboxylating] (390 aa).

This sequence belongs to the precorrin methyltransferase family.

The catalysed reaction is precorrin-6B + 2 S-adenosyl-L-methionine = precorrin-8X + 2 S-adenosyl-L-homocysteine + CO2 + 3 H(+). It functions in the pathway cofactor biosynthesis; adenosylcobalamin biosynthesis; cob(II)yrinate a,c-diamide from precorrin-2 (aerobic route): step 7/10. Catalyzes the methylation of both C-5 and C-15 in precorrin-6Y to form precorrin-8X. The sequence is that of Precorrin-6Y C(5,15)-methyltransferase [decarboxylating] (cobL) from Mycobacterium tuberculosis (strain ATCC 25618 / H37Rv).